A 655-amino-acid polypeptide reads, in one-letter code: p-hydroxybenzoic acid efflux pump subunit AaeB (655 aa).

The next 11 membrane-spanning stretches (helical) occupy residues 13–33 (FAVK…HFQL), 38–58 (WAVL…GGEP), 69–89 (LRII…ISMI), 93–113 (LLMI…SSLV), 121–141 (WGLS…EPLL), 152–172 (EIVI…PRSI), 370–390 (LFWL…IAVV), 407–427 (FIYG…VIIP), 431–451 (QSML…GIEV), 459–479 (MGAL…TFHF), and 482–502 (FLDS…VILL).

The protein belongs to the aromatic acid exporter ArAE (TC 2.A.85) family.

It localises to the cell inner membrane. Its function is as follows. Forms an efflux pump with AaeA. Could function as a metabolic relief valve, allowing to eliminate certain compounds when they accumulate to high levels in the cell. In Salmonella arizonae (strain ATCC BAA-731 / CDC346-86 / RSK2980), this protein is p-hydroxybenzoic acid efflux pump subunit AaeB.